A 223-amino-acid chain; its full sequence is MAQDQYKFVFTAKEAESEGVTEPMRLPNLIGKAMSLALAPISKYKVGAVGRARSGRIYLGVNVELPGLPLHHSIHAEQFLVTNLALNSEKGLHLLAVTISTDGNDFGAPCGNCRQFLMEISKALNIKILLKSKYEAEGSFKSLRLLLPDRFSPDDVLPKGSPLLLEKRHNCLSLSGSAEEICSSDCSHLKCKALAAANNSFSPYTNSPSGVALQDDDGNWYRG.

2 CMP/dCMP-type deaminase domains span residues 21-154 and 184-223; these read TEPM…FSPD and SDCSHLKCKALAAANNSFSPYTNSPSGVALQDDDGNWYRG. 62 to 64 contributes to the substrate binding site; sequence NVE. Position 75 (H75) interacts with Zn(2+). E77 serves as the catalytic Proton donor. Zn(2+) is bound by residues C110 and C113.

Belongs to the cytidine and deoxycytidylate deaminase family. As to quaternary structure, homodimer. Zn(2+) serves as cofactor.

The enzyme catalyses cytidine + H2O + H(+) = uridine + NH4(+). It carries out the reaction 2'-deoxycytidine + H2O + H(+) = 2'-deoxyuridine + NH4(+). In terms of biological role, this enzyme scavenges exogenous and endogenous cytidine and 2'-deoxycytidine for UMP synthesis. The sequence is that of Cytidine deaminase 3 (CDA3) from Arabidopsis thaliana (Mouse-ear cress).